The primary structure comprises 321 residues: Glucokinase (321 aa).

8–13 (GDVGGT) provides a ligand contact to ATP.

It belongs to the bacterial glucokinase family.

The protein resides in the cytoplasm. It carries out the reaction D-glucose + ATP = D-glucose 6-phosphate + ADP + H(+). In Pectobacterium atrosepticum (strain SCRI 1043 / ATCC BAA-672) (Erwinia carotovora subsp. atroseptica), this protein is Glucokinase.